Here is a 450-residue protein sequence, read N- to C-terminus: MEQAPPDPEKLLQPGPLEPLGGPGAVLEAAVGEENEGTREDGSGVDTMTGNNFWLKKIEISVSEAEKRTGRNAVNMQETYTAYLIETRSVEHADGQSVLTDSLWRRYSEFELLRNYLLVYYPHVVVPPLPEKRAEFVWHKLSADNMDPDFVERRRVGLENFLLRVASHPVLCRDKIFYSFLTQEGNWKETVNETGFQLKADSRLKALNATFRVKNPDKRFTELRHYSDELQSVISHLLRVRARVADRLYGVYKVHGNYGRVFSEWSAIEKEMGDGLQSAGHHMDVYASSIDDILEDEEHYADQLKEYLFYAEALRAVCRKHELMQYDLETAAQDLAAKKQQCEELATGTVRTFSLKGMTTKLFGQETPEQREARIKVLEEQINEGEQQLKSKNLEGREFVKNAWADIERFKEQKNRDLKEALISYAVMQISMCKKGIQVWTNAKECFSKM.

An N-acetylmethionine modification is found at Met1. The segment at 1–46 is disordered; sequence MEQAPPDPEKLLQPGPLEPLGGPGAVLEAAVGEENEGTREDGSGVD. A compositionally biased stretch (low complexity) spans 11-20; the sequence is LLQPGPLEPL. The region spanning 61–187 is the PX domain; it reads SVSEAEKRTG…YSFLTQEGNW (127 aa). A 1,2-diacyl-sn-glycero-3-phospho-(1D-myo-inositol-3-phosphate) is bound by residues Arg106, Ser108, Lys132, and Arg154.

The protein belongs to the sorting nexin family. Heterodimer; heterodimerizes with SNX7 or SNX30. Interacts with WWC1/KIBRA. Identified in a complex with WWC1/KIBRA and dynein components DYNLL1 and DYNC1I2. Interacts with BIN1.

It is found in the early endosome. The protein resides in the early endosome membrane. Its function is as follows. Involved in the regulation of endocytosis and in several stages of intracellular trafficking. Plays a role in recycling endocytosed transferrin receptor and prevent its degradation. Involved in autophagosome assembly by regulating trafficking and recycling of phospholipid scramblase ATG9A. The polypeptide is Sorting nexin-4 (Mus musculus (Mouse)).